A 146-amino-acid chain; its full sequence is UPF0260 protein Swoo_2117 (146 aa).

It belongs to the UPF0260 family.

This chain is UPF0260 protein Swoo_2117, found in Shewanella woodyi (strain ATCC 51908 / MS32).